The following is a 945-amino-acid chain: Leucine--tRNA ligase (945 aa).

A 'HIGH' region motif is present at residues 43–53 (PYPNGAIHIGH). The short motif at 638-642 (KMSKS) is the 'KMSKS' region element. An ATP-binding site is contributed by K641.

It belongs to the class-I aminoacyl-tRNA synthetase family.

The protein resides in the cytoplasm. It catalyses the reaction tRNA(Leu) + L-leucine + ATP = L-leucyl-tRNA(Leu) + AMP + diphosphate. The polypeptide is Leucine--tRNA ligase (Pyrobaculum aerophilum (strain ATCC 51768 / DSM 7523 / JCM 9630 / CIP 104966 / NBRC 100827 / IM2)).